Consider the following 399-residue polypeptide: Adenylate cyclase (399 aa).

The span at 1–10 (MTVGDTTSGS) shows a compositional bias: polar residues. Residues 1 to 35 (MTVGDTTSGSGEEPAADSSVHATPHHEVDHTVEPT) form a disordered region. The segment covering 24–33 (PHHEVDHTVE) has biased composition (basic and acidic residues). The Guanylate cyclase domain occupies 198–307 (RVRFADLVGF…TTVNLASRLT (110 aa)). Mg(2+)-binding residues include D203 and D247.

This sequence belongs to the adenylyl cyclase class-3 family. Mg(2+) serves as cofactor.

The catalysed reaction is ATP = 3',5'-cyclic AMP + diphosphate. The protein is Adenylate cyclase (cya) of Streptomyces griseus.